Consider the following 148-residue polypeptide: Deoxyuridine 5'-triphosphate nucleotidohydrolase (148 aa).

Substrate is bound by residues 65-67, Asn78, 82-84, and Lys92; these read RSG and TID.

It belongs to the dUTPase family. Requires Mg(2+) as cofactor.

The catalysed reaction is dUTP + H2O = dUMP + diphosphate + H(+). Its pathway is pyrimidine metabolism; dUMP biosynthesis; dUMP from dCTP (dUTP route): step 2/2. In terms of biological role, this enzyme is involved in nucleotide metabolism: it produces dUMP, the immediate precursor of thymidine nucleotides and it decreases the intracellular concentration of dUTP so that uracil cannot be incorporated into DNA. The sequence is that of Deoxyuridine 5'-triphosphate nucleotidohydrolase from Chlorobium luteolum (strain DSM 273 / BCRC 81028 / 2530) (Pelodictyon luteolum).